Consider the following 128-residue polypeptide: Cytochrome c-type biogenesis protein CcmE (128 aa).

Residues 1–7 (MKKKHKR) are Cytoplasmic-facing. A helical; Signal-anchor for type II membrane protein transmembrane segment spans residues 8-28 (LLVASGIFFFLNCIVFFILTI). The Extracellular segment spans residues 29-128 (LRENISFFYT…KHDENYMPRK (100 aa)). Heme contacts are provided by H120 and Y124.

The protein belongs to the CcmE/CycJ family.

Its subcellular location is the cell membrane. Functionally, heme chaperone required for the biogenesis of c-type cytochromes. Transiently binds heme delivered by CcmC and transfers the heme to apo-cytochromes in a process facilitated by CcmF and CcmH. The protein is Cytochrome c-type biogenesis protein CcmE of Wolbachia sp. subsp. Brugia malayi (strain TRS).